The sequence spans 337 residues: Anthranilate phosphoribosyltransferase (337 aa).

5-phospho-alpha-D-ribose 1-diphosphate contacts are provided by residues Gly82, 85 to 86, Thr90, 92 to 95, 110 to 118, and Ser122; these read GD, NIST, and KHGGRSVSS. Position 82 (Gly82) interacts with anthranilate. Position 94 (Ser94) interacts with Mg(2+). Residue Arg168 participates in anthranilate binding. Positions 226 and 227 each coordinate Mg(2+).

This sequence belongs to the anthranilate phosphoribosyltransferase family. Homodimer. Requires Mg(2+) as cofactor.

The enzyme catalyses N-(5-phospho-beta-D-ribosyl)anthranilate + diphosphate = 5-phospho-alpha-D-ribose 1-diphosphate + anthranilate. It participates in amino-acid biosynthesis; L-tryptophan biosynthesis; L-tryptophan from chorismate: step 2/5. Catalyzes the transfer of the phosphoribosyl group of 5-phosphorylribose-1-pyrophosphate (PRPP) to anthranilate to yield N-(5'-phosphoribosyl)-anthranilate (PRA). This chain is Anthranilate phosphoribosyltransferase, found in Francisella tularensis subsp. novicida (strain U112).